We begin with the raw amino-acid sequence, 347 residues long: Methylthioribose-1-phosphate isomerase (347 aa).

Residues 46–48 (RGA), R89, and Q196 each bind substrate. The active-site Proton donor is D237. 247-248 (NK) contacts substrate.

The protein belongs to the eIF-2B alpha/beta/delta subunits family. MtnA subfamily.

It carries out the reaction 5-(methylsulfanyl)-alpha-D-ribose 1-phosphate = 5-(methylsulfanyl)-D-ribulose 1-phosphate. The protein operates within amino-acid biosynthesis; L-methionine biosynthesis via salvage pathway; L-methionine from S-methyl-5-thio-alpha-D-ribose 1-phosphate: step 1/6. Its function is as follows. Catalyzes the interconversion of methylthioribose-1-phosphate (MTR-1-P) into methylthioribulose-1-phosphate (MTRu-1-P). In Chloroflexus aurantiacus (strain ATCC 29366 / DSM 635 / J-10-fl), this protein is Methylthioribose-1-phosphate isomerase.